Consider the following 144-residue polypeptide: Transcriptional regulator MraZ (144 aa).

2 consecutive SpoVT-AbrB domains span residues 5 to 50 (TFNH…ALPQ) and 81 to 124 (AHEV…DRAA).

Belongs to the MraZ family. Forms oligomers.

The protein resides in the cytoplasm. It localises to the nucleoid. This is Transcriptional regulator MraZ from Anaeromyxobacter dehalogenans (strain 2CP-C).